A 135-amino-acid chain; its full sequence is S-protein homolog 29 (135 aa).

An N-terminal signal peptide occupies residues 1–24; it reads MKNSSKIFVVLSIILFYVISSCHG. Residue Asn-110 is glycosylated (N-linked (GlcNAc...) asparagine).

Belongs to the plant self-incompatibility (S1) protein family.

Its subcellular location is the secreted. The sequence is that of S-protein homolog 29 from Arabidopsis thaliana (Mouse-ear cress).